An 847-amino-acid polypeptide reads, in one-letter code: B-cell receptor CD22 (847 aa).

Residues 1–19 form the signal peptide; it reads MHLLGPWLLLLVLEYLAFC. An Ig-like V-type domain is found at 20-138; it reads DSSKWAFEHP…MERIHLNVSE (119 aa). The Extracellular segment spans residues 20–687; the sequence is DSSKWAFEHP…YYSPETIGRR (668 aa). Asparagine 67, asparagine 101, and asparagine 112 each carry an N-linked (GlcNAc...) asparagine glycan. Position 120 (arginine 120) interacts with N-acetylneuraminate. 9 N-linked (GlcNAc...) asparagine glycosylation sites follow: asparagine 135, asparagine 164, asparagine 231, asparagine 295, asparagine 363, asparagine 428, asparagine 445, asparagine 448, and asparagine 479. Ig-like C2-type domains follow at residues 143-235, 242-324, 331-416, 419-500, 505-582, and 593-676; these read PHIQ…DTVQ, PKLE…AEVF, PEPS…LDVQ, PKKV…VALN, PRDV…QTAS, and PRRL…STLN. A disulfide bond links cysteine 161 and cysteine 219. Disulfide bonds link cysteine 265–cysteine 309 and cysteine 353–cysteine 396. 2 disulfides stabilise this stretch: cysteine 442–cysteine 484 and cysteine 529–cysteine 571. Asparagine 574 and asparagine 634 each carry an N-linked (GlcNAc...) asparagine glycan. An intrachain disulfide couples cysteine 616 to cysteine 659. The chain crosses the membrane as a helical span at residues 688–708; sequence VAVGLGSCLAILILAICGLKL. Residues 709-847 lie on the Cytoplasmic side of the membrane; the sequence is QRRWKRTQSQ…ENVDYVILKH (139 aa). Residues serine 725, serine 726, and serine 729 each carry the phosphoserine modification. 2 consecutive short sequence motifs (ITIM motif) follow at residues 760–765 and 794–799; these read ISYTTL and VTYSVL. Tyrosine 762 bears the Phosphotyrosine mark. Tyrosine 807, tyrosine 822, and tyrosine 842 each carry phosphotyrosine. Short sequence motifs (ITIM motif) lie at residues 820 to 825 and 840 to 845; these read IHYSEL and VDYVIL.

This sequence belongs to the immunoglobulin superfamily. SIGLEC (sialic acid binding Ig-like lectin) family. Predominantly monomer of isoform CD22-beta. Also found as heterodimer of isoform CD22-beta and a shorter isoform. Interacts with PTPN6/SHP-1, LYN, SYK, PIK3R1/PIK3R2 and PLCG1 upon phosphorylation. Interacts with GRB2, INPP5D and SHC1 upon phosphorylation. May form a complex with INPP5D/SHIP, GRB2 and SHC1. Phosphorylation of Tyr-762, Tyr-807 and Tyr-822 are involved in binding to SYK, GRB2 and SYK, respectively. Phosphorylation of Tyr-842 is involved in binding to SYK, PLCG2 and PIK3R1/PIK3R2. Post-translationally, phosphorylated on tyrosine residues by LYN.

It is found in the cell membrane. In terms of biological role, most highly expressed siglec (sialic acid-binding immunoglobulin-like lectin) on B-cells that plays a role in various aspects of B-cell biology including differentiation, antigen presentation, and trafficking to bone marrow. Binds to alpha 2,6-linked sialic acid residues of surface molecules such as CD22 itself, CD45 and IgM in a cis configuration. Can also bind to ligands on other cells as an adhesion molecule in a trans configuration. Acts as an inhibitory coreceptor on the surface of B-cells and inhibits B-cell receptor induced signaling, characterized by inhibition of the calcium mobilization and cellular activation. Mechanistically, the immunoreceptor tyrosine-based inhibitory motif domain is phosphorylated by the Src kinase LYN, which in turn leads to the recruitment of the protein tyrosine phosphatase 1/PTPN6, leading to the negative regulation of BCR signaling. If this negative signaling from is of sufficient strength, apoptosis of the B-cell can be induced. The protein is B-cell receptor CD22 of Gorilla gorilla gorilla (Western lowland gorilla).